The primary structure comprises 131 residues: Sec-independent protein translocase protein TatB (131 aa).

Residues 2–22 (LGSLSWEHMLVLVVVGLVVLG) traverse the membrane as a helical segment. The tract at residues 96–131 (AFDRPVNGAAAQPPPAPAPPPEPHRPGQTPFDADAT) is disordered. Residues 107–116 (QPPPAPAPPP) show a composition bias toward pro residues.

It belongs to the TatB family. In terms of assembly, the Tat system comprises two distinct complexes: a TatABC complex, containing multiple copies of TatA, TatB and TatC subunits, and a separate TatA complex, containing only TatA subunits. Substrates initially bind to the TatABC complex, which probably triggers association of the separate TatA complex to form the active translocon.

It localises to the cell membrane. Part of the twin-arginine translocation (Tat) system that transports large folded proteins containing a characteristic twin-arginine motif in their signal peptide across membranes. Together with TatC, TatB is part of a receptor directly interacting with Tat signal peptides. TatB may form an oligomeric binding site that transiently accommodates folded Tat precursor proteins before their translocation. This chain is Sec-independent protein translocase protein TatB, found in Mycobacterium avium (strain 104).